An 894-amino-acid chain; its full sequence is Alpha-actinin-2 (894 aa).

The segment at 1–254 (MNQIEPGVQY…IMTYVSCFYH (254 aa)) is actin-binding. 2 consecutive Calponin-homology (CH) domains span residues 38-142 (KQQR…LRFA) and 151-257 (TSAK…HAFA). Thr-237 is modified (phosphothreonine). 4 Spectrin repeats span residues 281–391 (RLME…WLLN), 401–506 (HLAE…ALER), 516–627 (QLHL…SLQE), and 637–740 (RLRR…EVET). 2 consecutive EF-hand domains span residues 753-788 (EQMN…MGYD) and 789-824 (LGEA…ETAD). Positions 766, 770, 777, 802, 804, and 808 each coordinate Ca(2+).

This sequence belongs to the alpha-actinin family. As to quaternary structure, homodimer; antiparallel. Also forms heterodimers with ACTN3. Interacts with ADAM12, MYOZ1, MYOZ2 and MYOZ3. Interacts via its C-terminal region with the LDB3 PDZ domain. Interacts with XIRP2. Interacts with DST (via N-terminus). Interacts with PARVB. Interacts with SYNPO2. Post-translationally, ubiquitinated by FBXL22, leading to proteasomal degradation.

It localises to the cytoplasm. The protein resides in the myofibril. Its subcellular location is the sarcomere. The protein localises to the z line. In terms of biological role, F-actin cross-linking protein which is thought to anchor actin to a variety of intracellular structures. This is a bundling protein. In Mus musculus (Mouse), this protein is Alpha-actinin-2 (Actn2).